A 1040-amino-acid chain; its full sequence is Multidrug resistance protein MdtB (1040 aa).

Helical transmembrane passes span 25–45, 347–367, 369–389, 396–416, 440–460, 472–492, 537–557, 863–883, 888–908, 910–930, 968–988, and 998–1018; these read LLMA…PVAA, LMLA…NIPA, IIPG…MVFL, LTLM…IVVI, IGFT…PLLF, FAVT…TLTP, WLTL…WIVI, LGST…VLGV, FIHP…ALLA, IIAG…LIGI, ILMT…STGV, and IAMV…TPVI.

This sequence belongs to the resistance-nodulation-cell division (RND) (TC 2.A.6) family. MdtB subfamily. Part of a tripartite efflux system composed of MdtA, MdtB and MdtC. MdtB forms a heteromultimer with MdtC.

It is found in the cell inner membrane. In Salmonella paratyphi A (strain ATCC 9150 / SARB42), this protein is Multidrug resistance protein MdtB.